The sequence spans 200 residues: Prophage tail fiber assembly protein homolog TfaE (200 aa).

It belongs to the tfa family.

In Escherichia coli (strain K12), this protein is Prophage tail fiber assembly protein homolog TfaE (tfaE).